Reading from the N-terminus, the 180-residue chain is Large ribosomal subunit protein uL5 (180 aa).

Belongs to the universal ribosomal protein uL5 family. In terms of assembly, part of the 50S ribosomal subunit; part of the 5S rRNA/L5/L18/L25 subcomplex. Contacts the 5S rRNA and the P site tRNA. Forms a bridge to the 30S subunit in the 70S ribosome.

In terms of biological role, this is one of the proteins that bind and probably mediate the attachment of the 5S RNA into the large ribosomal subunit, where it forms part of the central protuberance. In the 70S ribosome it contacts protein S13 of the 30S subunit (bridge B1b), connecting the 2 subunits; this bridge is implicated in subunit movement. Contacts the P site tRNA; the 5S rRNA and some of its associated proteins might help stabilize positioning of ribosome-bound tRNAs. This is Large ribosomal subunit protein uL5 from Streptococcus uberis (strain ATCC BAA-854 / 0140J).